We begin with the raw amino-acid sequence, 205 residues long: Ras-related and estrogen-regulated growth inhibitor-like protein (205 aa).

A small GTPase-like region spans residues 1 to 205; sequence MSNFLHLKYN…NVFGKRRKSV (205 aa). GTP-binding positions include 11-18, 58-64, and 123-126; these read EKSVSVTK, DPCSQTQ, and NKRD.

This sequence belongs to the small GTPase superfamily. Ras family.

It carries out the reaction GTP + H2O = GDP + phosphate + H(+). Binds GDP/GTP and may possess intrinsic GTPase activity. The protein is Ras-related and estrogen-regulated growth inhibitor-like protein (RERGL) of Homo sapiens (Human).